A 706-amino-acid chain; its full sequence is Fatty acid oxidation complex subunit alpha (706 aa).

The enoyl-CoA hydratase stretch occupies residues 1–188; the sequence is MEKTFNLTRR…KMGLVNDVVP (188 aa). A 3-hydroxyacyl-CoA dehydrogenase region spans residues 308–706; that stretch reads RKVKKAVILG…TMAQENAHFF (399 aa).

In the N-terminal section; belongs to the enoyl-CoA hydratase/isomerase family. It in the central section; belongs to the 3-hydroxyacyl-CoA dehydrogenase family. Heterotetramer of two alpha chains (FadJ) and two beta chains (FadI).

The protein resides in the cytoplasm. The catalysed reaction is a (3S)-3-hydroxyacyl-CoA = a (2E)-enoyl-CoA + H2O. The enzyme catalyses a 4-saturated-(3S)-3-hydroxyacyl-CoA = a (3E)-enoyl-CoA + H2O. It catalyses the reaction a (3S)-3-hydroxyacyl-CoA + NAD(+) = a 3-oxoacyl-CoA + NADH + H(+). It carries out the reaction (3S)-3-hydroxybutanoyl-CoA = (3R)-3-hydroxybutanoyl-CoA. Its pathway is lipid metabolism; fatty acid beta-oxidation. Functionally, catalyzes the formation of a hydroxyacyl-CoA by addition of water on enoyl-CoA. Also exhibits 3-hydroxyacyl-CoA epimerase and 3-hydroxyacyl-CoA dehydrogenase activities. The protein is Fatty acid oxidation complex subunit alpha of Shewanella baltica (strain OS155 / ATCC BAA-1091).